Reading from the N-terminus, the 281-residue chain is Endonuclease III-like protein 1 (281 aa).

The transit peptide at 1–17 (MCAAAPRGGGRAARRLG) directs the protein to the mitochondrion. Positions 1 to 60 (MCAAAPRGGGRAARRLGAATAGSRVPSAAPRYSRRTRRVPIAYEAEPKPESPGPKWEPEN) are disordered. Low complexity predominate over residues 15–24 (RLGAATAGSR). In terms of domain architecture, HhH spans 168–192 (KYGGDIPGTVEELVKLPGVGPKMAH). The Nucleophile; for N-glycosylase activity role is filled by K189. Positions 259, 266, 269, and 275 each coordinate [4Fe-4S] cluster.

Belongs to the Nth/MutY family. The cofactor is [4Fe-4S] cluster.

It is found in the nucleus. The protein resides in the mitochondrion. The enzyme catalyses 2'-deoxyribonucleotide-(2'-deoxyribose 5'-phosphate)-2'-deoxyribonucleotide-DNA = a 3'-end 2'-deoxyribonucleotide-(2,3-dehydro-2,3-deoxyribose 5'-phosphate)-DNA + a 5'-end 5'-phospho-2'-deoxyribonucleoside-DNA + H(+). Functionally, bifunctional DNA N-glycosylase with associated apurinic/apyrimidinic (AP) lyase function that catalyzes the first step in base excision repair (BER), the primary repair pathway for the repair of oxidative DNA damage. The DNA N-glycosylase activity releases the damaged DNA base from DNA by cleaving the N-glycosidic bond, leaving an AP site. The AP lyase activity cleaves the phosphodiester bond 3' to the AP site by a beta-elimination. Primarily recognizes and repairs oxidative base damage of pyrimidines. In Gallus gallus (Chicken), this protein is Endonuclease III-like protein 1.